A 691-amino-acid polypeptide reads, in one-letter code: Elongation factor G (691 aa).

A tr-type G domain is found at 8 to 282; sequence ERVRNIGIAA…AVVDYLPAPI (275 aa). Residues 17 to 24, 81 to 85, and 135 to 138 each bind GTP; these read AHIDAGKT, DTPGH, and NKMD.

This sequence belongs to the TRAFAC class translation factor GTPase superfamily. Classic translation factor GTPase family. EF-G/EF-2 subfamily.

It localises to the cytoplasm. In terms of biological role, catalyzes the GTP-dependent ribosomal translocation step during translation elongation. During this step, the ribosome changes from the pre-translocational (PRE) to the post-translocational (POST) state as the newly formed A-site-bound peptidyl-tRNA and P-site-bound deacylated tRNA move to the P and E sites, respectively. Catalyzes the coordinated movement of the two tRNA molecules, the mRNA and conformational changes in the ribosome. The sequence is that of Elongation factor G from Synechococcus sp. (strain WH7803).